A 144-amino-acid polypeptide reads, in one-letter code: MRNTARWAATLALTATAVCGPLTGAALATPAAAPASLYAPSALVLTVGHGTSAAAASPLRAVTLNCAPTASGTHPAPALACADLRGVGGDIDALKARDGVICNKLYDPVVVTVDGVWQGKRVSYERTFGNECVKNSYGTSLFAF.

The signal sequence occupies residues 1–34; it reads MRNTARWAATLALTATAVCGPLTGAALATPAAAP. 2 cysteine pairs are disulfide-bonded: cysteine 66–cysteine 81 and cysteine 102–cysteine 132.

The protein belongs to the protease inhibitor I16 (SSI) family. As to quaternary structure, homodimer.

It localises to the secreted. Its function is as follows. Inhibitory activity against trypsin. In Streptomyces longisporus, this protein is Trypsin inhibitor STI2 (sti2).